The following is a 187-amino-acid chain: MPHTPDLDAAVATLARGGVIAYPTEAVWGLGCDPRQEDAVLRLLEIKRRPVDKGVIVVASGLDVLQDWIDIAALGSEQLTAVLAQWPGPHTWILPVTAQAPRWVTGDHDGLAVRISAHPVVAALCKAWGAPLVSTSANLAGEPPARSRAALDPALLARIDGVLDGEVGGLAQPTPIRDARTGQILRD.

The YrdC-like domain maps to 4 to 187 (TPDLDAAVAT…DARTGQILRD (184 aa)).

This sequence belongs to the SUA5 family. TsaC subfamily.

Its subcellular location is the cytoplasm. The enzyme catalyses L-threonine + hydrogencarbonate + ATP = L-threonylcarbamoyladenylate + diphosphate + H2O. Functionally, required for the formation of a threonylcarbamoyl group on adenosine at position 37 (t(6)A37) in tRNAs that read codons beginning with adenine. Catalyzes the conversion of L-threonine, HCO(3)(-)/CO(2) and ATP to give threonylcarbamoyl-AMP (TC-AMP) as the acyladenylate intermediate, with the release of diphosphate. The chain is Threonylcarbamoyl-AMP synthase from Xanthomonas campestris pv. campestris (strain 8004).